Reading from the N-terminus, the 97-residue chain is Co-chaperonin GroES (97 aa).

Belongs to the GroES chaperonin family. In terms of assembly, heptamer of 7 subunits arranged in a ring. Interacts with the chaperonin GroEL.

It localises to the cytoplasm. In terms of biological role, together with the chaperonin GroEL, plays an essential role in assisting protein folding. The GroEL-GroES system forms a nano-cage that allows encapsulation of the non-native substrate proteins and provides a physical environment optimized to promote and accelerate protein folding. GroES binds to the apical surface of the GroEL ring, thereby capping the opening of the GroEL channel. This chain is Co-chaperonin GroES, found in Salmonella agona (strain SL483).